A 170-amino-acid polypeptide reads, in one-letter code: Putative calmodulin-like protein 6 (170 aa).

4 EF-hand domains span residues Gln-8–Ala-43, Pro-44–Glu-79, Asp-84–Glu-119, and Met-120–Ile-155. Residues Asp-21, Asn-23, Asp-25, Cys-27, Glu-32, Asp-57, Asp-59, Asn-61, Thr-63, Glu-68, Asp-97, Asp-99, Asn-101, Glu-108, Asp-133, Asn-135, Asp-137, Gln-139, and Glu-144 each contribute to the Ca(2+) site.

This sequence belongs to the calmodulin family.

Functionally, potential calcium sensor. The sequence is that of Putative calmodulin-like protein 6 (CML6) from Oryza sativa subsp. japonica (Rice).